The sequence spans 450 residues: Eukaryotic translation initiation factor 3 subunit E (450 aa).

In terms of domain architecture, PCI spans 255–424 (TELFFSPAYI…GTVIMNHPPQ (170 aa)).

Belongs to the eIF-3 subunit E family. Component of the eukaryotic translation initiation factor 3 (eIF-3) complex.

It localises to the cytoplasm. Functionally, component of the eukaryotic translation initiation factor 3 (eIF-3) complex, which is involved in protein synthesis of a specialized repertoire of mRNAs and, together with other initiation factors, stimulates binding of mRNA and methionyl-tRNAi to the 40S ribosome. The eIF-3 complex specifically targets and initiates translation of a subset of mRNAs involved in cell proliferation. The polypeptide is Eukaryotic translation initiation factor 3 subunit E (int6) (Aspergillus clavatus (strain ATCC 1007 / CBS 513.65 / DSM 816 / NCTC 3887 / NRRL 1 / QM 1276 / 107)).